Reading from the N-terminus, the 104-residue chain is Large ribosomal subunit protein uL24 (104 aa).

This sequence belongs to the universal ribosomal protein uL24 family. As to quaternary structure, part of the 50S ribosomal subunit.

In terms of biological role, one of two assembly initiator proteins, it binds directly to the 5'-end of the 23S rRNA, where it nucleates assembly of the 50S subunit. Functionally, one of the proteins that surrounds the polypeptide exit tunnel on the outside of the subunit. The sequence is that of Large ribosomal subunit protein uL24 from Nitrobacter winogradskyi (strain ATCC 25391 / DSM 10237 / CIP 104748 / NCIMB 11846 / Nb-255).